We begin with the raw amino-acid sequence, 179 residues long: Large ribosomal subunit protein uL5 (179 aa).

The protein belongs to the universal ribosomal protein uL5 family. As to quaternary structure, part of the 50S ribosomal subunit; part of the 5S rRNA/L5/L18/L25 subcomplex. Contacts the 5S rRNA and the P site tRNA. Forms a bridge to the 30S subunit in the 70S ribosome.

Functionally, this is one of the proteins that bind and probably mediate the attachment of the 5S RNA into the large ribosomal subunit, where it forms part of the central protuberance. In the 70S ribosome it contacts protein S13 of the 30S subunit (bridge B1b), connecting the 2 subunits; this bridge is implicated in subunit movement. Contacts the P site tRNA; the 5S rRNA and some of its associated proteins might help stabilize positioning of ribosome-bound tRNAs. The chain is Large ribosomal subunit protein uL5 from Aliivibrio salmonicida (strain LFI1238) (Vibrio salmonicida (strain LFI1238)).